A 244-amino-acid polypeptide reads, in one-letter code: HTH-type transcriptional repressor PhnF (244 aa).

The region spanning 8 to 74 (RILKHQVVRA…RGRTTVVARP (67 aa)) is the HTH gntR-type domain. The H-T-H motif DNA-binding region spans 35-54 (EREIAEQFEVARETVRQALR).

The protein localises to the cytoplasm. In terms of biological role, represses the phnDCE operon, involved in the uptake of phosphate, under conditions of phosphate availability in the cell. The chain is HTH-type transcriptional repressor PhnF (phnF) from Mycolicibacterium smegmatis (strain ATCC 700084 / mc(2)155) (Mycobacterium smegmatis).